Consider the following 165-residue polypeptide: MAKKPKAVKDSNNQVVATNRKARHNYSILDTYEAGIALMGTEVKSLREGQASLADAFATVDDGEIWLRNLHIPEYHHGTWTNHAPRRNRKLLMHRREIDNLVGKIRDGNLTLVPLSLYFTGGKVKVELALARGKQAHDKRQDMARRDAQREVTRELGRRVKGMTS.

Over residues 135–158 (QAHDKRQDMARRDAQREVTRELGR) the composition is skewed to basic and acidic residues. A disordered region spans residues 135–165 (QAHDKRQDMARRDAQREVTRELGRRVKGMTS).

Belongs to the SmpB family.

It is found in the cytoplasm. Required for rescue of stalled ribosomes mediated by trans-translation. Binds to transfer-messenger RNA (tmRNA), required for stable association of tmRNA with ribosomes. tmRNA and SmpB together mimic tRNA shape, replacing the anticodon stem-loop with SmpB. tmRNA is encoded by the ssrA gene; the 2 termini fold to resemble tRNA(Ala) and it encodes a 'tag peptide', a short internal open reading frame. During trans-translation Ala-aminoacylated tmRNA acts like a tRNA, entering the A-site of stalled ribosomes, displacing the stalled mRNA. The ribosome then switches to translate the ORF on the tmRNA; the nascent peptide is terminated with the 'tag peptide' encoded by the tmRNA and targeted for degradation. The ribosome is freed to recommence translation, which seems to be the essential function of trans-translation. The protein is SsrA-binding protein of Mycolicibacterium vanbaalenii (strain DSM 7251 / JCM 13017 / BCRC 16820 / KCTC 9966 / NRRL B-24157 / PYR-1) (Mycobacterium vanbaalenii).